The chain runs to 729 residues: Carbon monoxide dehydrogenase/acetyl-CoA synthase subunit alpha (729 aa).

Cys506, Cys509, Cys518, and Cys528 together coordinate [4Fe-4S] cluster. Residue Cys509 coordinates Ni(2+). The Ni(2+) site is built by Cys595, Gly596, and Cys597.

As to quaternary structure, tetramer of two alpha and two beta chains. Requires Ni cation as cofactor. [4Fe-4S] cluster is required as a cofactor.

The catalysed reaction is Co(I)-[corrinoid Fe-S protein] + acetyl-CoA + H(+) = methyl-Co(III)-[corrinoid Fe-S protein] + CO + CoA. Its function is as follows. The beta subunit generates CO from CO(2), while the alpha subunit (this protein) combines the CO with CoA and a methyl group to form acetyl-CoA. The methyl group, which is incorporated into acetyl-CoA, is transferred to the alpha subunit by a corrinoid iron-sulfur protein. The protein is Carbon monoxide dehydrogenase/acetyl-CoA synthase subunit alpha of Moorella thermoacetica (Clostridium thermoaceticum).